We begin with the raw amino-acid sequence, 100 residues long: Urease subunit gamma (100 aa).

It belongs to the urease gamma subunit family. Heterotrimer of UreA (gamma), UreB (beta) and UreC (alpha) subunits. Three heterotrimers associate to form the active enzyme.

The protein resides in the cytoplasm. The catalysed reaction is urea + 2 H2O + H(+) = hydrogencarbonate + 2 NH4(+). Its pathway is nitrogen metabolism; urea degradation; CO(2) and NH(3) from urea (urease route): step 1/1. In Mycobacterium bovis (strain ATCC BAA-935 / AF2122/97), this protein is Urease subunit gamma.